A 219-amino-acid chain; its full sequence is Uracil-DNA glycosylase (219 aa).

Aspartate 64 acts as the Proton acceptor in catalysis.

This sequence belongs to the uracil-DNA glycosylase (UDG) superfamily. UNG family.

It is found in the cytoplasm. It carries out the reaction Hydrolyzes single-stranded DNA or mismatched double-stranded DNA and polynucleotides, releasing free uracil.. In terms of biological role, excises uracil residues from the DNA which can arise as a result of misincorporation of dUMP residues by DNA polymerase or due to deamination of cytosine. The sequence is that of Uracil-DNA glycosylase from Leuconostoc citreum (strain KM20).